A 110-amino-acid polypeptide reads, in one-letter code: Protein RnfH (110 aa).

A disordered region spans residues 86-110 (RQRRVEKSRQEGSVEGRKWLPKDSR). The segment covering 88 to 110 (RRVEKSRQEGSVEGRKWLPKDSR) has biased composition (basic and acidic residues).

This sequence belongs to the UPF0125 (RnfH) family.

The polypeptide is Protein RnfH (Paraburkholderia phymatum (strain DSM 17167 / CIP 108236 / LMG 21445 / STM815) (Burkholderia phymatum)).